A 240-amino-acid polypeptide reads, in one-letter code: MORN repeat-containing protein 3 (240 aa).

An interaction with MDM2 region spans residues 6–35 (CPKKSESLWKGWDRKAQRNGLRSQVYAVNG). MORN repeat units follow at residues 38 to 60 (YVGE…KKGA), 62 to 84 (YEGD…DQQT), 91 to 113 (YSGW…PKEY), 114 to 136 (YEGD…NGDI), 137 to 159 (YEGQ…NGNR), 160 to 182 (YEGC…DHGQ), and 184 to 205 (FEGF…GRDE). The interaction with SIRT1 stretch occupies residues 76–100 (TLSLPDQQTGKCRRVYSGWWKGDKK). The interaction with TP53 stretch occupies residues 206-240 (APEPTQFPIPEVKILDPDGVLAEALAMFRKTEEGD).

Interacts with MEIG1. Interacts with TP53, MDM2 and SIRT1; the interactions mediate post-transcriptional modifications of TP53 by MDM2 and SIRT1.

It localises to the cytoplasmic vesicle. The protein localises to the secretory vesicle. Its subcellular location is the acrosome. Assembles a suppression complex (suppresome) by tethering SIRT1 and MDM2 to regulate composite modifications of p53/TP53. Confers both deacetylation-mediated functional inactivation, by SIRT1, and ubiquitination-dependent degradation, by MDM2, of p53/TP53, promoting a proliferative and cell survival behaviors. May play a role in the regulation of spermatogenesis. This Homo sapiens (Human) protein is MORN repeat-containing protein 3.